The following is a 324-amino-acid chain: Aspartate carbamoyltransferase catalytic subunit (324 aa).

R71 and T72 together coordinate carbamoyl phosphate. K99 is a binding site for L-aspartate. Carbamoyl phosphate contacts are provided by R121, H151, and Q154. Residues R184 and R239 each coordinate L-aspartate. Carbamoyl phosphate-binding residues include G280 and P281.

Belongs to the aspartate/ornithine carbamoyltransferase superfamily. ATCase family. Heterododecamer (2C3:3R2) of six catalytic PyrB chains organized as two trimers (C3), and six regulatory PyrI chains organized as three dimers (R2).

The catalysed reaction is carbamoyl phosphate + L-aspartate = N-carbamoyl-L-aspartate + phosphate + H(+). The protein operates within pyrimidine metabolism; UMP biosynthesis via de novo pathway; (S)-dihydroorotate from bicarbonate: step 2/3. Functionally, catalyzes the condensation of carbamoyl phosphate and aspartate to form carbamoyl aspartate and inorganic phosphate, the committed step in the de novo pyrimidine nucleotide biosynthesis pathway. This Cupriavidus necator (strain ATCC 17699 / DSM 428 / KCTC 22496 / NCIMB 10442 / H16 / Stanier 337) (Ralstonia eutropha) protein is Aspartate carbamoyltransferase catalytic subunit.